Here is a 248-residue protein sequence, read N- to C-terminus: Homeobox protein BarH-like 1 (248 aa).

Positions 135–194 form a DNA-binding region, homeobox; that stretch reads GRRSRTVFTELQLMGLEKRFEKQKYLSTPDRIDLAESLGLSQLQVKTWYQNRRMKWKKIV. Residues 197 to 248 form a disordered region; the sequence is GGGLESPTKPKGRPKKNSIPTSEQLSEQERTREADRLSDGGASSLSDANQEE. Residues 223–234 show a composition bias toward basic and acidic residues; the sequence is EQERTREADRLS. Residues 237–248 are compositionally biased toward polar residues; sequence GASSLSDANQEE.

The protein belongs to the BAR homeobox family.

The protein resides in the nucleus. Transcription factor, is involved in craniofacial development, and in stomach organogenesis. This Danio rerio (Zebrafish) protein is Homeobox protein BarH-like 1 (barx1).